The sequence spans 465 residues: ATP-dependent rRNA helicase rrp3 (465 aa).

A compositionally biased stretch (basic and acidic residues) spans 1 to 22 (MAPSEKKLTEDKKNSSLNKKIE). Positions 1 to 44 (MAPSEKKLTEDKKNSSLNKKIETSNSSSEKSSENNNGDSQNNEA) are disordered. Residues 23 to 36 (TSNSSSEKSSENNN) are compositionally biased toward low complexity. Positions 46-74 (KTFKELGVIDELCEACEKLGFKTPTPIQQ) match the Q motif motif. The Helicase ATP-binding domain occupies 77-248 (IPVVLNKRDV…RASLHQPVRV (172 aa)). 90–97 (AQTGSGKT) contributes to the ATP binding site. The short motif at 196–199 (DEAD) is the DEAD box element. Positions 275-419 (YLVYLVNELA…EYEIDKEGVF (145 aa)) constitute a Helicase C-terminal domain. Residues 442–453 (RRKSKGKLHTKR) are compositionally biased toward basic residues. Residues 442–465 (RRKSKGKLHTKRKRDDLDREEQIY) form a disordered region. Residues 454–465 (KRDDLDREEQIY) are compositionally biased toward basic and acidic residues.

It belongs to the DEAD box helicase family. DDX47/RRP3 subfamily. As to quaternary structure, interacts with the SSU processome.

The protein localises to the nucleus. It carries out the reaction ATP + H2O = ADP + phosphate + H(+). ATP-dependent rRNA helicase required for pre-ribosomal RNA processing. Involved in the maturation of the 35S-pre-rRNA and to its cleavage to mature 18S rRNA. This chain is ATP-dependent rRNA helicase rrp3, found in Schizosaccharomyces pombe (strain 972 / ATCC 24843) (Fission yeast).